The primary structure comprises 452 residues: Isocitrate dehydrogenase [NADP], mitochondrial (452 aa).

Residues 1–39 (MAGYLRAVSSLCRASGSARTWAPAALTVPSWPEQPRRHY) constitute a mitochondrion transit peptide. K45, K48, K67, and K69 each carry N6-acetyllysine. An N6-acetyllysine; alternate mark is found at K80 and K106. An N6-succinyllysine; alternate mark is found at K80 and K106. NADP(+)-binding positions include 115-117 (TIT) and R122. T117 contributes to the D-threo-isocitrate binding site. Residues 134-140 (SPNGTIR) and R149 contribute to the D-threo-isocitrate site. At K155 the chain carries N6-acetyllysine. K166 carries the N6-acetyllysine; alternate modification. K166 carries the post-translational modification N6-succinyllysine; alternate. R172 contributes to the D-threo-isocitrate binding site. N6-acetyllysine; alternate occurs at positions 180 and 193. K180 and K193 each carry N6-succinyllysine; alternate. K199 carries the N6-acetyllysine modification. The residue at position 256 (K256) is an N6-acetyllysine; alternate. K256 carries the post-translational modification N6-succinyllysine; alternate. N6-acetyllysine occurs at positions 263, 272, 275, and 280. At K282 the chain carries N6-acetyllysine; alternate. An N6-succinyllysine; alternate modification is found at K282. D291 is a Mn(2+) binding site. K299 serves as a coordination point for NADP(+). Residue D314 participates in Mn(2+) binding. NADP(+) contacts are provided by residues 349–354 (GTVTRH) and N367. K384 bears the N6-acetyllysine; alternate mark. K384 is modified (N6-succinyllysine; alternate). Residues K400, K413, and K442 each carry the N6-acetyllysine modification.

The protein belongs to the isocitrate and isopropylmalate dehydrogenases family. In terms of assembly, homodimer. Mg(2+) serves as cofactor. Requires Mn(2+) as cofactor. In terms of processing, acetylation at Lys-413 dramatically reduces catalytic activity. Deacetylated by SIRT3. As to expression, predominantly expressed in heart, liver and kidney. Expressed in activated B lymphocytes.

Its subcellular location is the mitochondrion. It catalyses the reaction D-threo-isocitrate + NADP(+) = 2-oxoglutarate + CO2 + NADPH. In terms of biological role, plays a role in intermediary metabolism and energy production. It may tightly associate or interact with the pyruvate dehydrogenase complex. This chain is Isocitrate dehydrogenase [NADP], mitochondrial (Idh2), found in Mus musculus (Mouse).